The sequence spans 341 residues: Radial spoke head 14 homolog (341 aa).

8 ARM repeats span residues 16 to 55, 57 to 96, 99 to 138, 139 to 178, 180 to 217, 219 to 258, 260 to 300, and 302 to 339; these read PTKA…DLMH, PEYV…IMAT, VGRV…LAQL, PKGA…LCLQ, DATE…AISI, LDGK…HATV, TEGK…MLAE, and PEGR…VIEW.

It belongs to the flagellar radial spoke RSP14 family. Component of the axonemal radial spoke complex 1 (RS1), at least composed of spoke head proteins RSPH1, RSPH3, RSPH9 and the cilia-specific component RSPH4A or sperm-specific component RSPH6A, spoke stalk proteins RSPH14, DNAJB13, DYDC1, ROPN1L and NME5, and the anchor protein IQUB.

Its subcellular location is the cytoplasm. It is found in the cytoskeleton. The protein resides in the flagellum axoneme. In terms of biological role, functions as part of axonemal radial spoke complexes that play an important part in the motility of sperm and cilia. In Mus musculus (Mouse), this protein is Radial spoke head 14 homolog.